Consider the following 333-residue polypeptide: 6-phosphogluconolactonase (333 aa).

Belongs to the cycloisomerase 2 family.

The enzyme catalyses 6-phospho-D-glucono-1,5-lactone + H2O = 6-phospho-D-gluconate + H(+). The protein operates within carbohydrate degradation; pentose phosphate pathway; D-ribulose 5-phosphate from D-glucose 6-phosphate (oxidative stage): step 2/3. Catalyzes the hydrolysis of 6-phosphogluconolactone to 6-phosphogluconate. The polypeptide is 6-phosphogluconolactonase (Buchnera aphidicola subsp. Schizaphis graminum (strain Sg)).